We begin with the raw amino-acid sequence, 390 residues long: Chalcone synthase (390 aa).

Residue C164 is part of the active site.

This sequence belongs to the thiolase-like superfamily. Chalcone/stilbene synthases family.

The enzyme catalyses (E)-4-coumaroyl-CoA + 3 malonyl-CoA + 3 H(+) = 2',4,4',6'-tetrahydroxychalcone + 3 CO2 + 4 CoA. Its pathway is secondary metabolite biosynthesis; flavonoid biosynthesis. In terms of biological role, the primary product of this enzyme is 4,2',4',6'-tetrahydroxychalcone (also termed naringenin-chalcone or chalcone) which can under specific conditions spontaneously isomerize into naringenin. This is Chalcone synthase (CHS) from Antirrhinum majus (Garden snapdragon).